The chain runs to 472 residues: Tryptophan--tRNA ligase, cytoplasmic (472 aa).

In terms of domain architecture, WHEP-TRS spans 9–65 (SPLELFNSIATQGELVRSLKAGNASKDEIDSAVKMLLSLKMSYKAAMGEDYKANCPP). The residue at position 155 (Lys-155) is an N6-succinyllysine. Positions 165–174 (PSSEAMHVGH) match the 'HIGH' region motif. The 'KMSKS' region motif lies at 350–354 (KMSAS). At Ser-352 the chain carries Phosphoserine.

The protein belongs to the class-I aminoacyl-tRNA synthetase family. As to quaternary structure, homodimer. Interacts with oxidized form of GAPDH. Post-translationally, proteolytic cleavage generates 2 forms; T1-TrpRS and T2-TrpRS.

It is found in the cytoplasm. The enzyme catalyses tRNA(Trp) + L-tryptophan + ATP = L-tryptophyl-tRNA(Trp) + AMP + diphosphate + H(+). In terms of biological role, catalyzes the attachment of tryptophan to tRNA(Trp) in a two-step reaction: tryptophan is first activated by ATP to form Trp-AMP and then transferred to the acceptor end of the tRNA(Trp). Could also possess an angiostatic activity. This is Tryptophan--tRNA ligase, cytoplasmic (WARS1) from Pongo abelii (Sumatran orangutan).